A 1108-amino-acid polypeptide reads, in one-letter code: DNA-directed RNA polymerase subunit beta (1108 aa).

The protein belongs to the RNA polymerase beta chain family. In terms of assembly, in plastids the minimal PEP RNA polymerase catalytic core is composed of four subunits: alpha, beta, beta', and beta''. When a (nuclear-encoded) sigma factor is associated with the core the holoenzyme is formed, which can initiate transcription.

It is found in the plastid. The protein localises to the chloroplast. It carries out the reaction RNA(n) + a ribonucleoside 5'-triphosphate = RNA(n+1) + diphosphate. In terms of biological role, DNA-dependent RNA polymerase catalyzes the transcription of DNA into RNA using the four ribonucleoside triphosphates as substrates. In Gnetum parvifolium (Small-leaved jointfir), this protein is DNA-directed RNA polymerase subunit beta.